The chain runs to 127 residues: Protein ApaG (127 aa).

The ApaG domain occupies 3 to 127; the sequence is EGKKYQINIS…FTLAMPRVLH (125 aa).

This Thiobacillus denitrificans (strain ATCC 25259 / T1) protein is Protein ApaG.